We begin with the raw amino-acid sequence, 473 residues long: Phosphatidylserine synthase 1 (473 aa).

Ala-2 bears the N-acetylalanine mark. Residues 2–35 (ASCVGSRTLSKDDVNYKMHFRMINEQQVEDITID) lie on the Cytoplasmic side of the membrane. A helical membrane pass occupies residues 36–56 (FFYRPHTITLLSFTIVSLMYF). Topologically, residues 57–72 (AFTRDDSVPEDNIWRG) are lumenal. A helical transmembrane segment spans residues 73–93 (ILSVIFFFLIISVLAFPNGPF). At 94–102 (TRPHPALWR) the chain is on the cytoplasmic side. Residues 103 to 123 (MVFGLSVLYFLFLVFLLFLNF) form a helical membrane-spanning segment. Over 124-186 (EQVKSLMYWL…AMKALLIRSY (63 aa)) the chain is Lumenal. Residues 187 to 207 (GLCWTISITWELTELFFMHLL) traverse the membrane as a helical segment. The Cytoplasmic segment spans residues 208-216 (PNFAECWWD). A helical membrane pass occupies residues 217–237 (QVILDILLCNGGGIWLGMVVC). At 238-286 (RFLEMRTYHWASFKDIHTTTGKIKRAVLQFTPASWTYVRWFDPKSSFQR) the chain is on the lumenal side. The helical transmembrane segment at 287–307 (VAGVYLFMIIWQLTELNTFFL) threads the bilayer. Residues 308–319 (KHIFVFQASHPL) lie on the Cytoplasmic side of the membrane. A helical transmembrane segment spans residues 320 to 342 (SWGRILFIGGITAPTVRQYYAYL). Residues 343–355 (TDTQCKRVGTQCW) are Lumenal-facing. The helical transmembrane segment at 356 to 376 (VFGVIGFLEAIVCIKFGQDLF) threads the bilayer. The Cytoplasmic segment spans residues 377–383 (SKTQILY). Residues 384 to 404 (VVLWLLCVAFTTFLCLYGMIW) traverse the membrane as a helical segment. Residues 405–473 (YAEHYGHREK…SKVTNGVGKK (69 aa)) are Lumenal-facing. Residues Ser-417, Ser-425, Ser-442, and Ser-454 each carry the phosphoserine modification. The disordered stretch occupies residues 430–473 (WHHRKGTKGSEDSPPKHAGNNESHSSRRRNRHSKSKVTNGVGKK). A compositionally biased stretch (basic residues) spans 455 to 464 (SRRRNRHSKS).

It belongs to the phosphatidyl serine synthase family.

It localises to the endoplasmic reticulum membrane. It catalyses the reaction a 1,2-diacyl-sn-glycero-3-phosphoethanolamine + L-serine = a 1,2-diacyl-sn-glycero-3-phospho-L-serine + ethanolamine. It carries out the reaction a 1,2-diacyl-sn-glycero-3-phosphocholine + L-serine = a 1,2-diacyl-sn-glycero-3-phospho-L-serine + choline. It functions in the pathway phospholipid metabolism; phosphatidylserine biosynthesis. Requires calcium ions. Inhibited by exogenous phosphatidylserine. Functionally, catalyzes a base-exchange reaction in which the polar head group of phosphatidylethanolamine (PE) or phosphatidylcholine (PC) is replaced by L-serine. Catalyzes mainly the conversion of phosphatidylcholine. Also converts, in vitro and to a lesser extent, phosphatidylethanolamine. The sequence is that of Phosphatidylserine synthase 1 (PTDSS1) from Homo sapiens (Human).